Reading from the N-terminus, the 506-residue chain is Acrylate reductase flavoprotein subunit (506 aa).

Residues 1 to 30 constitute a signal peptide (tat-type signal); the sequence is MSNKDLLGRRNFIKGMGAAAGVAMAAPALA. FAD contacts are provided by Ala-54, Glu-74, Asn-82, Gly-87, and Gly-88. Arg-333 (proton donor) is an active-site residue. Residues Glu-473 and Ile-489 each coordinate FAD.

This sequence belongs to the FAD-dependent oxidoreductase 2 family. FRD/SDH subfamily. In terms of assembly, the ArdAB flavocytochrome c is composed of a FAD-containing subunit (ArdA) and a heme c-containing subunit (ArdB). It depends on FAD as a cofactor. Post-translationally, predicted to be exported by the Tat system. The position of the signal peptide cleavage has not been experimentally proven.

Its subcellular location is the periplasm. Its activity is regulated as follows. Methacrylate acts as a competitive inhibitor of the acrylate reductase activity and suppresses the reductase activity in dose-dependent manner. In terms of biological role, FAD-containing subunit of the ArdAB flavocytochrome c, which catalyzes the reduction of acrylate to propanoate and supports dimethylsulfoniopropionate-dependent anaerobic respiration. In vitro, can use the artificial electron donor methyl viologen. The natural electron donor is probably a low-potential cytochrome c. Also shows weak activity toward methacrylate in vitro (at a 22-fold lower rate) but cannot use other tested 2-enoates, including crotonic, fumaric, sorbic, urocanic, cinnamic, p-coumaric, caffeic or ferulic acids. The protein catalyzes a unidirectional reaction and cannot oxidize propanoate with phenazine metasulfate and dichlorophenolindophenol as electron acceptors. In Shewanella woodyi (strain ATCC 51908 / MS32), this protein is Acrylate reductase flavoprotein subunit.